Reading from the N-terminus, the 938-residue chain is Isoleucine--tRNA ligase (938 aa).

The 'HIGH' region motif lies at 58 to 68 (PYANGNIHIGH). L-isoleucyl-5'-AMP is bound at residue E561. The 'KMSKS' region signature appears at 602-606 (KMSKS). K605 serves as a coordination point for ATP. C901, C904, C921, and C924 together coordinate Zn(2+).

The protein belongs to the class-I aminoacyl-tRNA synthetase family. IleS type 1 subfamily. As to quaternary structure, monomer. Zn(2+) is required as a cofactor.

It localises to the cytoplasm. It carries out the reaction tRNA(Ile) + L-isoleucine + ATP = L-isoleucyl-tRNA(Ile) + AMP + diphosphate. Functionally, catalyzes the attachment of isoleucine to tRNA(Ile). As IleRS can inadvertently accommodate and process structurally similar amino acids such as valine, to avoid such errors it has two additional distinct tRNA(Ile)-dependent editing activities. One activity is designated as 'pretransfer' editing and involves the hydrolysis of activated Val-AMP. The other activity is designated 'posttransfer' editing and involves deacylation of mischarged Val-tRNA(Ile). The sequence is that of Isoleucine--tRNA ligase from Yersinia pseudotuberculosis serotype O:1b (strain IP 31758).